A 533-amino-acid polypeptide reads, in one-letter code: Thromboxane-A synthase (533 aa).

The Cytoplasmic portion of the chain corresponds to 1–10 (MEALGFLKLE). Residues 11 to 31 (VNGPMVTVALSVALLALLKWY) form a helical membrane-spanning segment. Residues 32-75 (STSAFSRLEKLGLRHPKPSPFIGNLMFFRQGFWESQMELRKLYG) lie on the Lumenal side of the membrane. A helical transmembrane segment spans residues 76 to 96 (PLCGYYLGRRMFIVISEPDMI). Residues 97 to 223 (KQVLVENFSN…KRFFEFCIPR (127 aa)) are Cytoplasmic-facing. Residues 224–244 (PILVLLLSFPSIMVPLARILP) form a helical membrane-spanning segment. Residues 245–335 (NKNRDELNGF…LTVDEIVGQA (91 aa)) lie on the Lumenal side of the membrane. Residues 336–356 (FIFLIAGYEIVTNTLSFATYL) form a helical membrane-spanning segment. At 357–533 (LATNPDCQEK…NGVYIKIVSR (177 aa)) the chain is on the cytoplasmic side. Heme is bound at residue Cys-479.

This sequence belongs to the cytochrome P450 family. In terms of assembly, monomer. Requires heme as cofactor.

It localises to the endoplasmic reticulum membrane. It carries out the reaction prostaglandin H2 = thromboxane A2. The enzyme catalyses prostaglandin H2 = (12S)-hydroxy-(5Z,8E,10E)-heptadecatrienoate + malonaldehyde. The catalysed reaction is a hydroperoxyeicosatetraenoate = an oxoeicosatetraenoate + H2O. It catalyses the reaction (15S)-hydroperoxy-(5Z,8Z,11Z,13E)-eicosatetraenoate = 15-oxo-(5Z,8Z,11Z,13E)-eicosatetraenoate + H2O. It carries out the reaction (15S)-hydroperoxy-(5Z,8Z,11Z,13E)-eicosatetraenoate + AH2 = (15S)-hydroxy-(5Z,8Z,11Z,13E)-eicosatetraenoate + A + H2O. In terms of biological role, catalyzes the conversion of prostaglandin H2 (PGH2) to thromboxane A2 (TXA2), a potent inducer of blood vessel constriction and platelet aggregation. Also cleaves PGH2 to 12-hydroxy-heptadecatrienoicacid (12-HHT) and malondialdehyde, which is known to act as a mediator of DNA damage. 12-HHT and malondialdehyde are formed stoichiometrically in the same amounts as TXA2. Additionally, displays dehydratase activity, toward (15S)-hydroperoxy-(5Z,8Z,11Z,13E)-eicosatetraenoate (15(S)-HPETE) producing 15-KETE and 15-HETE. This Macaca fascicularis (Crab-eating macaque) protein is Thromboxane-A synthase (TBXAS1).